The following is a 673-amino-acid chain: F-box/LRR-repeat protein 17 (673 aa).

Residues 1-39 (MGHVAPHASKKEHVAPHAAEKDHVAPHASKKEHVAPHAA) form a disordered region. Basic and acidic residues predominate over residues 9-39 (SKKEHVAPHAAEKDHVAPHASKKEHVAPHAA). One can recognise an F-box domain in the interval 291-338 (PLHINQLPSSLLLKIFSNLSLNERCILASLVCKYWRDLCLDSQFWKQL).

This sequence belongs to the FBXL17 family. In terms of assembly, part of the SCF (SKP1-CUL1-F-box) E3 ubiquitin-protein ligase complex SCF(FBXL17). Interacts with BTB domain-containing proteins; specifically recognizes and binds a conserved degron of non-consecutive residues present at the interface of BTB dimers of aberrant composition. Expressed in the neuro-ectoderm of embryos.

Its subcellular location is the cytoplasm. The protein resides in the nucleus. Functionally, substrate-recognition component of the SCF(FBXL17) E3 ubiquitin ligase complex, a key component of a quality control pathway required to ensure functional dimerization of BTB domain-containing proteins (dimerization quality control, DQC). FBXL17 specifically recognizes and binds a conserved degron of non-consecutive residues present at the interface of BTB dimers of aberrant composition: aberrant BTB dimer are then ubiquitinated by the SCF(FBXL17) complex and degraded by the proteasome. The ability of the SCF(FBXL17) complex to eliminate compromised BTB dimers is required for the differentiation and survival of neural crest and neuronal cells. The polypeptide is F-box/LRR-repeat protein 17 (Xenopus laevis (African clawed frog)).